The chain runs to 148 residues: Large ribosomal subunit protein bL9 (148 aa).

The protein belongs to the bacterial ribosomal protein bL9 family.

Its function is as follows. Binds to the 23S rRNA. The chain is Large ribosomal subunit protein bL9 from Dechloromonas aromatica (strain RCB).